The sequence spans 149 residues: Probable flagellum biosynthesis repressor protein FlbT (149 aa).

It belongs to the FlbT family.

In terms of biological role, has a post-transcriptional repressor function in flagellum biogenesis. Associates with the 5'-UTR of fljK mRNA and promotes its degradation. The sequence is that of Probable flagellum biosynthesis repressor protein FlbT from Allorhizobium ampelinum (strain ATCC BAA-846 / DSM 112012 / S4) (Agrobacterium vitis (strain S4)).